The following is a 431-amino-acid chain: Adenylosuccinate synthetase (431 aa).

Residues 13–19 (GDEGKGK) and 41–43 (GHT) contribute to the GTP site. Aspartate 14 serves as the catalytic Proton acceptor. Residues aspartate 14 and glycine 41 each coordinate Mg(2+). IMP contacts are provided by residues 14–17 (DEGK), 39–42 (NAGH), threonine 130, arginine 144, glutamine 225, threonine 240, and arginine 304. Catalysis depends on histidine 42, which acts as the Proton donor. 300–306 (AVTGRPR) contributes to the substrate binding site. Residues arginine 306, 332–334 (KLD), and 415–417 (STG) contribute to the GTP site.

The protein belongs to the adenylosuccinate synthetase family. Homodimer. Mg(2+) serves as cofactor.

Its subcellular location is the cytoplasm. It carries out the reaction IMP + L-aspartate + GTP = N(6)-(1,2-dicarboxyethyl)-AMP + GDP + phosphate + 2 H(+). It functions in the pathway purine metabolism; AMP biosynthesis via de novo pathway; AMP from IMP: step 1/2. Plays an important role in the de novo pathway of purine nucleotide biosynthesis. Catalyzes the first committed step in the biosynthesis of AMP from IMP. The polypeptide is Adenylosuccinate synthetase (Legionella pneumophila (strain Paris)).